Consider the following 397-residue polypeptide: Serpin B10 (397 aa).

Positions Lys74–Lys77 match the Nuclear localization signal motif.

Belongs to the serpin family. Ov-serpin subfamily.

The protein resides in the nucleus. It is found in the cytoplasm. Its function is as follows. Protease inhibitor that may play a role in the regulation of protease activities during hematopoiesis and apoptosis induced by TNF. May regulate protease activities in the cytoplasm and in the nucleus. The sequence is that of Serpin B10 (SERPINB10) from Plecturocebus moloch (Dusky titi monkey).